Reading from the N-terminus, the 157-residue chain is Lipoprotein signal peptidase (157 aa).

Helical transmembrane passes span 10–30, 36–56, 58–78, and 84–104; these read FIFI…KYAI, YESS…FSLL, FLEG…FIFL, and LFKA…SNIL. Residues D114 and D131 contribute to the active site. A helical membrane pass occupies residues 123-143; that stretch reads DFAIFNFADVMIDVGVGVLLI.

The protein belongs to the peptidase A8 family.

It localises to the cell inner membrane. The catalysed reaction is Release of signal peptides from bacterial membrane prolipoproteins. Hydrolyzes -Xaa-Yaa-Zaa-|-(S,diacylglyceryl)Cys-, in which Xaa is hydrophobic (preferably Leu), and Yaa (Ala or Ser) and Zaa (Gly or Ala) have small, neutral side chains.. It functions in the pathway protein modification; lipoprotein biosynthesis (signal peptide cleavage). In terms of biological role, this protein specifically catalyzes the removal of signal peptides from prolipoproteins. This is Lipoprotein signal peptidase from Helicobacter acinonychis (strain Sheeba).